A 297-amino-acid chain; its full sequence is Acetyl-coenzyme A carboxylase carboxyl transferase subunit beta (297 aa).

The CoA carboxyltransferase N-terminal domain occupies 25-294; that stretch reads LWVKCPETGQ…LPPKGRLPRP (270 aa).

The protein belongs to the AccD/PCCB family. Acetyl-CoA carboxylase is a heterohexamer composed of biotin carboxyl carrier protein (AccB), biotin carboxylase (AccC) and two subunits each of ACCase subunit alpha (AccA) and ACCase subunit beta (AccD).

It localises to the cytoplasm. The catalysed reaction is N(6)-carboxybiotinyl-L-lysyl-[protein] + acetyl-CoA = N(6)-biotinyl-L-lysyl-[protein] + malonyl-CoA. The protein operates within lipid metabolism; malonyl-CoA biosynthesis; malonyl-CoA from acetyl-CoA: step 1/1. Component of the acetyl coenzyme A carboxylase (ACC) complex. Biotin carboxylase (BC) catalyzes the carboxylation of biotin on its carrier protein (BCCP) and then the CO(2) group is transferred by the transcarboxylase to acetyl-CoA to form malonyl-CoA. This Xanthobacter autotrophicus (strain ATCC BAA-1158 / Py2) protein is Acetyl-coenzyme A carboxylase carboxyl transferase subunit beta.